The sequence spans 32 residues: Alpha-2-macroglobulin homolog (32 aa).

The isoglutamyl cysteine thioester (Cys-Gln) cross-link spans 16–19; that stretch reads CGEQ.

This sequence belongs to the protease inhibitor I39 (alpha-2-macroglobulin) family. Homodimer; disulfide-linked.

Its subcellular location is the secreted. In terms of biological role, is able to inhibit all four classes of proteinases by a unique 'trapping' mechanism. This protein has a peptide stretch, called the 'bait region' which contains specific cleavage sites for different proteinases. When a proteinase cleaves the bait region, a conformational change is induced in the protein which traps the proteinase. The entrapped enzyme remains active against low molecular weight substrates (activity against high molecular weight substrates is greatly reduced). Following cleavage in the bait region a thioester bond is hydrolyzed and mediates the covalent binding of the protein to the proteinase. The protein is Alpha-2-macroglobulin homolog of Pacifastacus leniusculus (Signal crayfish).